The following is a 301-amino-acid chain: Cytidine deaminase 1 (301 aa).

CMP/dCMP-type deaminase domains are found at residues 23–156 (SVIQ…FGPD) and 188–301 (DSSA…CYEA). Residue 64-66 (NVE) participates in substrate binding. Residue His-77 coordinates Zn(2+). Catalysis depends on Glu-79, which acts as the Proton donor. Zn(2+) contacts are provided by Cys-104 and Cys-107.

This sequence belongs to the cytidine and deoxycytidylate deaminase family. As to quaternary structure, homodimer. The cofactor is Zn(2+). In terms of tissue distribution, expressed in roots, rosette leaves, stems and flowers.

The enzyme catalyses cytidine + H2O + H(+) = uridine + NH4(+). The catalysed reaction is 2'-deoxycytidine + H2O + H(+) = 2'-deoxyuridine + NH4(+). Its activity is regulated as follows. Inhibited by uridine, CMP and dCMP. In terms of biological role, this enzyme scavenges exogenous and endogenous cytidine and 2'-deoxycytidine for UMP synthesis. Functions as a conventional cytidine deaminase. Has no affinity for RNA and is not involved in RNA-editing by C-to-U deamination. This chain is Cytidine deaminase 1 (CDA1), found in Arabidopsis thaliana (Mouse-ear cress).